A 146-amino-acid chain; its full sequence is Large ribosomal subunit protein uL15 (146 aa).

A disordered region spans residues methionine 1 to proline 56. Composition is skewed to gly residues over residues arginine 21 to glutamine 35 and serine 42 to glycine 52.

It belongs to the universal ribosomal protein uL15 family. In terms of assembly, part of the 50S ribosomal subunit.

Functionally, binds to the 23S rRNA. The sequence is that of Large ribosomal subunit protein uL15 from Clostridium botulinum (strain Loch Maree / Type A3).